Reading from the N-terminus, the 166-residue chain is Protein BioX (166 aa).

5 helical membrane passes run 12–32 (ISLL…TGIP), 33–53 (GSEF…FGFK), 55–75 (YFLA…HSIL), 87–107 (VGLI…AGPI), and 117–137 (AFTL…GMVI).

Its subcellular location is the cell membrane. Functionally, does not seem to be a permease of pimelate. Its role in biotin synthesis is not clear. This Lysinibacillus sphaericus (Bacillus sphaericus) protein is Protein BioX (bioX).